A 196-amino-acid chain; its full sequence is Holliday junction branch migration complex subunit RuvA (196 aa).

The domain I stretch occupies residues 1-64 (MIDRLRGQLV…EDAMLLFGFA (64 aa)). The segment at 65–143 (TREEREAFDA…AAAGGGGGVA (79 aa)) is domain II. A flexible linker region spans residues 144 to 153 (AGEGDGPFME). The segment at 153 to 196 (EAREALTGLGYSLEEAERALRDVPPQETVEQYIKAALRKIGGRR) is domain III.

This sequence belongs to the RuvA family. As to quaternary structure, homotetramer. Forms an RuvA(8)-RuvB(12)-Holliday junction (HJ) complex. HJ DNA is sandwiched between 2 RuvA tetramers; dsDNA enters through RuvA and exits via RuvB. An RuvB hexamer assembles on each DNA strand where it exits the tetramer. Each RuvB hexamer is contacted by two RuvA subunits (via domain III) on 2 adjacent RuvB subunits; this complex drives branch migration. In the full resolvosome a probable DNA-RuvA(4)-RuvB(12)-RuvC(2) complex forms which resolves the HJ.

It localises to the cytoplasm. Its function is as follows. The RuvA-RuvB-RuvC complex processes Holliday junction (HJ) DNA during genetic recombination and DNA repair, while the RuvA-RuvB complex plays an important role in the rescue of blocked DNA replication forks via replication fork reversal (RFR). RuvA specifically binds to HJ cruciform DNA, conferring on it an open structure. The RuvB hexamer acts as an ATP-dependent pump, pulling dsDNA into and through the RuvAB complex. HJ branch migration allows RuvC to scan DNA until it finds its consensus sequence, where it cleaves and resolves the cruciform DNA. The chain is Holliday junction branch migration complex subunit RuvA from Rubrobacter xylanophilus (strain DSM 9941 / JCM 11954 / NBRC 16129 / PRD-1).